A 171-amino-acid chain; its full sequence is Putative ankyrin repeat protein PA3287 (171 aa).

ANK repeat units follow at residues 48-77, 81-110, and 114-143; these read KGDS…DPDL, AGQT…DVEG, and DGKT…RRDA.

The sequence is that of Putative ankyrin repeat protein PA3287 from Pseudomonas aeruginosa (strain ATCC 15692 / DSM 22644 / CIP 104116 / JCM 14847 / LMG 12228 / 1C / PRS 101 / PAO1).